A 359-amino-acid chain; its full sequence is Peptide methionine sulfoxide reductase MsrA/MsrB (359 aa).

A peptide methionine sulfoxide reductase A region spans residues 36–189 (RVIYLAGGCF…PSGYCHIDLK (154 aa)). C44 is an active-site residue. One can recognise a MsrB domain in the interval 206–329 (DEVLKKKLTK…NSAALRFIPL (124 aa)). C318 functions as the Nucleophile in the catalytic mechanism.

In the N-terminal section; belongs to the MsrA Met sulfoxide reductase family. This sequence in the C-terminal section; belongs to the MsrB Met sulfoxide reductase family.

It carries out the reaction L-methionyl-[protein] + [thioredoxin]-disulfide + H2O = L-methionyl-(S)-S-oxide-[protein] + [thioredoxin]-dithiol. It catalyses the reaction [thioredoxin]-disulfide + L-methionine + H2O = L-methionine (S)-S-oxide + [thioredoxin]-dithiol. The catalysed reaction is L-methionyl-[protein] + [thioredoxin]-disulfide + H2O = L-methionyl-(R)-S-oxide-[protein] + [thioredoxin]-dithiol. Has an important function as a repair enzyme for proteins that have been inactivated by oxidation. Catalyzes the reversible oxidation-reduction of methionine sulfoxide in proteins to methionine. In Helicobacter pylori (strain ATCC 700392 / 26695) (Campylobacter pylori), this protein is Peptide methionine sulfoxide reductase MsrA/MsrB (msrAB).